We begin with the raw amino-acid sequence, 63 residues long: Lysis protein (63 aa).

Residues 21–43 traverse the membrane as a helical segment; that stretch reads LYVWIALAIVLSDFTSIFSHWIW.

It belongs to the Leviviricetes lysis protein family.

Its subcellular location is the host cell inner membrane. The protein resides in the host cell outer membrane. Functionally, induces the formation of specific membrane adhesion sites between the inner and outer membranes, apparently leading to host cell lysis. Lysis may be performed via activation of host murein hydrolases. This is Lysis protein from Escherichia coli (Bacteriophage GA).